The primary structure comprises 81 residues: Photosystem I iron-sulfur center (81 aa).

2 4Fe-4S ferredoxin-type domains span residues 2-31 (SHSVKIYDTCIGCTQCVRACPTDVLEMIPW) and 39-68 (IASAPRTEDCVGCKRCESACPTDFLSVRVS). Cys-11, Cys-14, Cys-17, Cys-21, Cys-48, Cys-51, Cys-54, and Cys-58 together coordinate [4Fe-4S] cluster.

As to quaternary structure, the eukaryotic PSI reaction center is composed of at least 11 subunits. [4Fe-4S] cluster serves as cofactor.

The protein resides in the plastid. It localises to the chloroplast thylakoid membrane. It carries out the reaction reduced [plastocyanin] + hnu + oxidized [2Fe-2S]-[ferredoxin] = oxidized [plastocyanin] + reduced [2Fe-2S]-[ferredoxin]. In terms of biological role, apoprotein for the two 4Fe-4S centers FA and FB of photosystem I (PSI); essential for photochemical activity. FB is the terminal electron acceptor of PSI, donating electrons to ferredoxin. The C-terminus interacts with PsaA/B/D and helps assemble the protein into the PSI complex. Required for binding of PsaD and PsaE to PSI. PSI is a plastocyanin-ferredoxin oxidoreductase, converting photonic excitation into a charge separation, which transfers an electron from the donor P700 chlorophyll pair to the spectroscopically characterized acceptors A0, A1, FX, FA and FB in turn. In Daucus carota (Wild carrot), this protein is Photosystem I iron-sulfur center.